The sequence spans 233 residues: Uracil-DNA glycosylase (233 aa).

Residue Asp-70 is the Proton acceptor of the active site.

Belongs to the uracil-DNA glycosylase (UDG) superfamily. UNG family.

The protein resides in the cytoplasm. The catalysed reaction is Hydrolyzes single-stranded DNA or mismatched double-stranded DNA and polynucleotides, releasing free uracil.. Its function is as follows. Excises uracil residues from the DNA which can arise as a result of misincorporation of dUMP residues by DNA polymerase or due to deamination of cytosine. In Helicobacter pylori (strain G27), this protein is Uracil-DNA glycosylase.